Here is a 416-residue protein sequence, read N- to C-terminus: MNDYFRIKKIKGYQILDSRGNKTIRVKIETYGGISETGDAPAGASKGSREAIELRDKDGGVTRAVELVNTLINDSLRDFDVRNQLGIDQTLIRMDGTPNKSRVGGNTTIATSIAVAKTAAKAMGLEIFQYIGGPRVRYLPIPLLNILNGGLHAGNELKIQEFIIIPLSFDSFHEALYAADEVYKQLKGIITEKYGKLYTMLGDEGGVAPPLSKTEDALDLVYTAIKNSGYEDKIVMGIDAASSDFFNGSQYEIDGKKLSPDEMIDYYIQLASRYPLLYIEDPFNENDFERFSILQQKLKKTIVTGDDLFTTNIEYLKKGIEKSSAKGTIVKPNQIGTLSETFEYIEFAKKNSIKIIVSHRSGETEDSFIADLAVGVQSDFIKTGAPARGERTSKYNRLLEIENDYGIEYYGKKIYL.

A (2R)-2-phosphoglycerate-binding site is contributed by Gln-160. Glu-204 (proton donor) is an active-site residue. Residues Asp-239, Glu-280, and Asp-306 each contribute to the Mg(2+) site. (2R)-2-phosphoglycerate is bound by residues Lys-331, Arg-360, Ser-361, and Lys-382. Lys-331 (proton acceptor) is an active-site residue.

Belongs to the enolase family. Mg(2+) serves as cofactor.

The protein localises to the cytoplasm. It localises to the secreted. Its subcellular location is the cell surface. The catalysed reaction is (2R)-2-phosphoglycerate = phosphoenolpyruvate + H2O. The protein operates within carbohydrate degradation; glycolysis; pyruvate from D-glyceraldehyde 3-phosphate: step 4/5. Catalyzes the reversible conversion of 2-phosphoglycerate (2-PG) into phosphoenolpyruvate (PEP). It is essential for the degradation of carbohydrates via glycolysis. In Sulfurisphaera tokodaii (strain DSM 16993 / JCM 10545 / NBRC 100140 / 7) (Sulfolobus tokodaii), this protein is Enolase.